The chain runs to 135 residues: Lymphocyte antigen 6 complex locus protein G6d (135 aa).

The N-terminal stretch at 1 to 19 (MNSQLVGILLSALLGVALG) is a signal peptide. A UPAR/Ly6 domain is found at 22 to 121 (TRCYDCGGGP…ASSVTPLCIL (100 aa)). 5 cysteine pairs are disulfide-bonded: Cys-24-Cys-48, Cys-27-Cys-35, Cys-42-Cys-76, Cys-82-Cys-101, and Cys-102-Cys-107. O-linked (GalNAc...) threonine glycosylation occurs at Thr-68. Asn-108 carries GPI-anchor amidated asparagine lipidation. A propeptide spans 109-135 (SAVASSVTPLCILAAAVTTLAWLLPGL) (removed in mature form).

As to quaternary structure, homodimer. Post-translationally, O-glycosylated. As to expression, expressed in embryonic tissue and adult lung, kidney, brain, liver and spleen.

Its subcellular location is the cell membrane. The protein localises to the cell projection. It is found in the filopodium. This chain is Lymphocyte antigen 6 complex locus protein G6d (Ly6g6d), found in Mus musculus (Mouse).